Consider the following 515-residue polypeptide: Meiotically up-regulated gene 68 protein (515 aa).

The interval 165–204 is disordered; sequence LHSIESERNESSLSLDSGESEKKSEEDNGNGEQNYIPEQY.

Functionally, has a role in meiosis. This Schizosaccharomyces pombe (strain 972 / ATCC 24843) (Fission yeast) protein is Meiotically up-regulated gene 68 protein (mug68).